The primary structure comprises 89 residues: Neurotoxin beta-KTx 12 (89 aa).

Residues 1-20 (MKQYIFFLALIVLVSTFAEA) form the signal peptide. Positions 21–39 (GKKTEILDKVKKVFSKAKD) are excised as a propeptide. In terms of domain architecture, BetaSPN-type CS-alpha/beta spans 53–89 (ELGCPFIDKWCEDHCESKKLVGKCENFDCSCVKLGGK). Intrachain disulfides connect C56–C76, C63–C81, and C67–C83.

The protein belongs to the long chain scorpion toxin family. Class 2 subfamily. As to expression, expressed by the venom gland.

The protein resides in the secreted. Functionally, inhibits voltage-gated potassium channel. This is Neurotoxin beta-KTx 12 from Lychas mucronatus (Chinese swimming scorpion).